Consider the following 78-residue polypeptide: Omega-conotoxin-like SO-4 (78 aa).

The N-terminal stretch at 1–22 is a signal peptide; that stretch reads MKLTCMVIVAVLLLTACQLITA. Positions 23 to 42 are excised as a propeptide; the sequence is DDSRGTQKHRSLRSTTKVSK. 3 cysteine pairs are disulfide-bonded: C46–C62, C53–C65, and C61–C72.

It belongs to the conotoxin O1 superfamily. As to expression, expressed by the venom duct.

It localises to the secreted. Omega-conotoxins act at presynaptic membranes, they bind and block voltage-gated calcium channels (Cav). This Conus striatus (Striated cone) protein is Omega-conotoxin-like SO-4 (SO4).